Here is a 342-residue protein sequence, read N- to C-terminus: 29 kDa ribonucleoprotein, chloroplastic (342 aa).

The transit peptide at 1–65 directs the protein to the chloroplast; that stretch reads MSASASSLSA…PAEYPSRFVR (65 aa). In terms of domain architecture, RRM 1 spans 99-177; it reads LKLFVGNLSF…RPLRVNAGPP (79 aa). Residues Ser-107 and Ser-204 each carry the phosphoserine modification. The segment at 167 to 255 is disordered; the sequence is GRPLRVNAGP…GSGSGSGSGS (89 aa). Positions 178–256 are linker (Gly-rich); that stretch reads PPKREESFSR…SGSGSGSGSG (79 aa). 2 stretches are compositionally biased toward gly residues: residues 190–237 and 245–255; these read RSGG…GYGG and SGSGSGSGSGS. Positions 257 to 335 constitute an RRM 2 domain; the sequence is NRLYVGNLSW…RQIRVSEAEA (79 aa).

The protein localises to the plastid. Its subcellular location is the chloroplast. In terms of biological role, stabilizes specific chloroplast mRNAs. Required for normal chloroplast development under cold stress conditions by stabilizing transcripts of numerous mRNAs under these conditions. In Arabidopsis thaliana (Mouse-ear cress), this protein is 29 kDa ribonucleoprotein, chloroplastic.